The primary structure comprises 174 residues: ATP-dependent protease subunit HslV (174 aa).

The active site involves threonine 2. Positions 157, 160, and 163 each coordinate Na(+).

Belongs to the peptidase T1B family. HslV subfamily. In terms of assembly, a double ring-shaped homohexamer of HslV is capped on each side by a ring-shaped HslU homohexamer. The assembly of the HslU/HslV complex is dependent on binding of ATP.

The protein localises to the cytoplasm. It carries out the reaction ATP-dependent cleavage of peptide bonds with broad specificity.. Allosterically activated by HslU binding. Its function is as follows. Protease subunit of a proteasome-like degradation complex believed to be a general protein degrading machinery. This is ATP-dependent protease subunit HslV from Shewanella oneidensis (strain ATCC 700550 / JCM 31522 / CIP 106686 / LMG 19005 / NCIMB 14063 / MR-1).